We begin with the raw amino-acid sequence, 330 residues long: ADP-L-glycero-D-manno-heptose-6-epimerase (330 aa).

NADP(+) is bound by residues 11–12 (FI), 32–33 (DN), K39, K54, 75–79 (EGACS), and N92. Y139 functions as the Proton acceptor in the catalytic mechanism. K143 lines the NADP(+) pocket. Residue N168 participates in substrate binding. Residues V169 and K177 each contribute to the NADP(+) site. K177 serves as the catalytic Proton acceptor. Residues R179, H186, 200 to 203 (FGEY), R213, and Y292 contribute to the substrate site.

It belongs to the NAD(P)-dependent epimerase/dehydratase family. HldD subfamily. As to quaternary structure, homopentamer. NADP(+) is required as a cofactor.

The catalysed reaction is ADP-D-glycero-beta-D-manno-heptose = ADP-L-glycero-beta-D-manno-heptose. It participates in nucleotide-sugar biosynthesis; ADP-L-glycero-beta-D-manno-heptose biosynthesis; ADP-L-glycero-beta-D-manno-heptose from D-glycero-beta-D-manno-heptose 7-phosphate: step 4/4. In terms of biological role, catalyzes the interconversion between ADP-D-glycero-beta-D-manno-heptose and ADP-L-glycero-beta-D-manno-heptose via an epimerization at carbon 6 of the heptose. The sequence is that of ADP-L-glycero-D-manno-heptose-6-epimerase from Burkholderia multivorans (strain ATCC 17616 / 249).